The chain runs to 186 residues: UPF0397 protein lp_0150 (186 aa).

5 helical membrane-spanning segments follow: residues 12–32 (VVAT…VAIP), 45–65 (GFLA…AVFI), 76–96 (GSPW…FGLA), 112–132 (LVWF…LLAP), and 151–171 (VITW…LLVL).

It belongs to the UPF0397 family.

The protein localises to the cell membrane. This is UPF0397 protein lp_0150 from Lactiplantibacillus plantarum (strain ATCC BAA-793 / NCIMB 8826 / WCFS1) (Lactobacillus plantarum).